A 499-amino-acid chain; its full sequence is MASTTTCTRFTDEYQLFEELGKGAFSVVRRCMKIPTGQEYAAKIINTKKLSARDHQKLEREARICRLLKHPNIVRLHDSISEEGFHYLVFDLVTGGELFEDIVAREYYSEADASHCIQQILESVNHCHLNGIVHRDLKPENLLLASKSKGAAVKLADFGLAIEVQGDQQAWFGFAGTPGYLSPEVLRKDPYGKPVDMWACGVILYILLVGYPPFWDEDQHRLYQQIKAGAYDFPSPEWDTVTPEAKDLINKMLTINPAKRITASEALKHPWICQRSTVASMMHRQETVDCLKKFNARRKLKGAILTTMLATRNFSAAKSLLKKPDGVKESTESSNTTIEDEDVKARKQEIIKVTEQLIEAINNGDFEAYTKICDPGLTAFEPEALGNLVEGMDFHRFYFENALSKSNKPIHTIILNPHVHLVGDDAACIAYIRLTQYMDGSGMPKTMQSEETRVWHRRDGKWQNVHFHRSGSPTVPIKPSCIPNGKENFSGSTSLWQNI.

N-acetylalanine is present on A2. A Protein kinase domain is found at 14–272 (YQLFEELGKG…ASEALKHPWI (259 aa)). ATP-binding positions include 20 to 28 (LGKGAFSVV) and K43. The active-site Proton acceptor is the D136. Positions 283 to 292 (HRQETVDCLK) are autoinhibitory domain. Position 287 is a phosphothreonine; by autocatalysis (T287). Residues 291 to 301 (LKKFNARRKLK) form a calmodulin-binding region. 2 positions are modified to phosphothreonine; by autocatalysis: T306 and T307. S315 is modified (phosphoserine). N6-acetyllysine is present on K318. Residues S319 and S330 each carry the phosphoserine modification. Phosphothreonine is present on T331. S333 is subject to Phosphoserine. T336 and T337 each carry phosphothreonine. A phosphoserine mark is found at S404, S490, and S494.

It belongs to the protein kinase superfamily. CAMK Ser/Thr protein kinase family. CaMK subfamily. CAMK2 is composed of 4 different chains: alpha (CAMK2A), beta (CAMK2B), gamma (CAMK2G), and delta (CAMK2D). The different isoforms assemble into homo- or heteromultimeric holoenzymes composed of 12 subunits with two hexameric rings stacked one on top of the other. Interacts with RRAD CACNB2. Autophosphorylation of Thr-287 following activation by Ca(2+)/calmodulin. Phosphorylation of Thr-287 locks the kinase into an activated state.

It is found in the cell membrane. The protein localises to the sarcolemma. The protein resides in the sarcoplasmic reticulum membrane. The catalysed reaction is L-seryl-[protein] + ATP = O-phospho-L-seryl-[protein] + ADP + H(+). It catalyses the reaction L-threonyl-[protein] + ATP = O-phospho-L-threonyl-[protein] + ADP + H(+). Its activity is regulated as follows. Activated by Ca(2+)/calmodulin. Binding of calmodulin results in conformational change that relieves intrasteric autoinhibition and allows autophosphorylation of Thr-287 which turns the kinase in a constitutively active form and confers to the kinase a Ca(2+)-independent activity. Functionally, calcium/calmodulin-dependent protein kinase involved in the regulation of Ca(2+) homeostatis and excitation-contraction coupling (ECC) in heart by targeting ion channels, transporters and accessory proteins involved in Ca(2+) influx into the myocyte, Ca(2+) release from the sarcoplasmic reticulum (SR), SR Ca(2+) uptake and Na(+) and K(+) channel transport. Targets also transcription factors and signaling molecules to regulate heart function. In its activated form, is involved in the pathogenesis of dilated cardiomyopathy and heart failure. Contributes to cardiac decompensation and heart failure by regulating SR Ca(2+) release via direct phosphorylation of RYR2 Ca(2+) channel on 'Ser-2808'. In the nucleus, phosphorylates the MEF2 repressor HDAC4, promoting its nuclear export and binding to 14-3-3 protein, and expression of MEF2 and genes involved in the hypertrophic program. Is essential for left ventricular remodeling responses to myocardial infarction. In pathological myocardial remodeling acts downstream of the beta adrenergic receptor signaling cascade to regulate key proteins involved in ECC. Regulates Ca(2+) influx to myocytes by binding and phosphorylating the L-type Ca(2+) channel subunit beta-2 CACNB2. In addition to Ca(2+) channels, can target and regulate the cardiac sarcolemmal Na(+) channel Nav1.5/SCN5A and the K+ channel Kv4.3/KCND3, which contribute to arrhythmogenesis in heart failure. Phosphorylates phospholamban (PLN/PLB), an endogenous inhibitor of SERCA2A/ATP2A2, contributing to the enhancement of SR Ca(2+) uptake that may be important in frequency-dependent acceleration of relaxation (FDAR) and maintenance of contractile function during acidosis. May participate in the modulation of skeletal muscle function in response to exercise, by regulating SR Ca(2+) transport through phosphorylation of PLN/PLB and triadin, a ryanodine receptor-coupling factor. In response to interferon-gamma (IFN-gamma) stimulation, catalyzes phosphorylation of STAT1, stimulating the JAK-STAT signaling pathway. This Sus scrofa (Pig) protein is Calcium/calmodulin-dependent protein kinase type II subunit delta (CAMK2D).